A 233-amino-acid chain; its full sequence is Lipoprotein-releasing system ATP-binding protein LolD (233 aa).

An ABC transporter domain is found at 6 to 233 (LQCDNLCKRY…TAELSLMGAE (228 aa)). 42–49 (GSSGSGKS) provides a ligand contact to ATP.

The protein belongs to the ABC transporter superfamily. Lipoprotein translocase (TC 3.A.1.125) family. In terms of assembly, the complex is composed of two ATP-binding proteins (LolD) and two transmembrane proteins (LolC and LolE).

The protein resides in the cell inner membrane. Its function is as follows. Part of the ABC transporter complex LolCDE involved in the translocation of mature outer membrane-directed lipoproteins, from the inner membrane to the periplasmic chaperone, LolA. Responsible for the formation of the LolA-lipoprotein complex in an ATP-dependent manner. This chain is Lipoprotein-releasing system ATP-binding protein LolD, found in Shigella boydii serotype 4 (strain Sb227).